A 419-amino-acid polypeptide reads, in one-letter code: MKKLFKKKKGVSPHMYMLPEESNSNTATNAPSYSVGGTTANSYSSNSYNDNNNSNSTYGSSNNYGNYGSSNNYGSYGASNTYGSNGSSNNYGNYGATNSNGDAGYSITPIRNDPYARKDMPPMKSSAAVTERPSMHRSAPSQDTLDLKKQELFAGARIQNDDESTTDTIPHNDDGTEGDEYGEGYRDGYEEDQEVEAIKQKIQFVKQDSLSSTRNALLMAGNAEQMGLATLANLGEQTEKIATAEKELDISKIHAKRAEEQARELKTLNRSMFAIHVPKPWGKAKRVAAEEARLAAKRDAERQDEMLNRQFAYRSQKRIDQAMKDNMKSNKKKGDSKGVSILERSHYQFEPDAEDDAMEKEIDGNLDQIGALATRLKGLAYATGQEIDSQNARLGSIHDKSDRLDTDVYLNVERLRHIH.

The span at 1-11 (MKKLFKKKKGV) shows a compositional bias: basic residues. Disordered regions lie at residues 1-60 (MKKL…TYGS), 116-143 (ARKDMPPMKSSAAVTERPSMHRSAPSQD), and 156-186 (ARIQNDDESTTDTIPHNDDGTEGDEYGEGYR). Polar residues predominate over residues 21–32 (ESNSNTATNAPS). Residues 36–60 (GGTTANSYSSNSYNDNNNSNSTYGS) are compositionally biased toward low complexity. Serine 141 carries the phosphoserine modification. 2 consecutive t-SNARE coiled-coil homology domains span residues 203-265 (QFVK…AREL) and 356-418 (DAME…LRHI).

This sequence belongs to the SNAP-25 family.

Its function is as follows. Has a role in cell separation, a final step of cytokinesis and in the assembly of the forespore membrane. May have a role in the transport of secretory proteins to these growing sites. The sequence is that of Protein transport protein sec9 (sec9) from Schizosaccharomyces pombe (strain 972 / ATCC 24843) (Fission yeast).